Here is a 919-residue protein sequence, read N- to C-terminus: Glutamate receptor ionotropic, kainate 3 (919 aa).

The signal sequence occupies residues 1–31 (MTAPWRRLRSLVWEYWAGFLVCAFWIPDSRG). Residues 32 to 563 (MPHVIRIGGI…VFSFLNPLSP (532 aa)) are Extracellular-facing. N-linked (GlcNAc...) asparagine glycosylation is found at asparagine 70, asparagine 76, asparagine 278, asparagine 381, asparagine 415, asparagine 426, and asparagine 433. Cysteine 99 and cysteine 350 form a disulfide bridge. L-glutamate-binding residues include proline 518, threonine 520, and arginine 525. N-linked (GlcNAc...) asparagine glycosylation is found at asparagine 548 and asparagine 551. A helical transmembrane segment spans residues 564–584 (DIWMYVLLAYLGVSCVLFVIA). The Cytoplasmic segment spans residues 585 to 636 (RFSPYEWYDAHPCNPGSEVVENNFTLLNSFWFGMGSLMQQGSELMPKALSTR). The chain crosses the membrane as a helical span at residues 637-657 (IIGGIWWFFTLIIISSYTANL). Residues 658–820 (AAFLTVERME…KEASALGIQK (163 aa)) are Extracellular-facing. Alanine 691, threonine 692, and glutamate 739 together coordinate L-glutamate. A glycan (N-linked (GlcNAc...) asparagine) is linked at asparagine 752. Residues 821–841 (IGGIFIVLAAGLVLSVLVAVG) form a helical membrane-spanning segment. Residues 842 to 919 (EFIYKLRKTA…CSTSLAPVFP (78 aa)) lie on the Cytoplasmic side of the membrane. Position 869 is a phosphoserine (serine 869). A Glycyl lysine isopeptide (Lys-Gly) (interchain with G-Cter in SUMO1) cross-link involves residue lysine 887.

Belongs to the glutamate-gated ion channel (TC 1.A.10.1) family. GRIK3 subfamily. In terms of assembly, homotetramer, and heterotetramer with either GRIK4 or GRIK5. Can form functional heteromeric receptors with GRIK2. Interacts with PRKCABP. Interacts with NETO2. Detected in whole brain, cerebellum, brain cortex and hippocampus.

Its subcellular location is the cell membrane. It is found in the postsynaptic cell membrane. The enzyme catalyses Ca(2+)(in) = Ca(2+)(out). Its activity is regulated as follows. Glutamate-gated receptor activity inhibited by spermine. Its function is as follows. Ionotropic glutamate receptor that functions as a cation-permeable ligand-gated ion channel, gated by L-glutamate and the glutamatergic agonist kainic acid. Binding of the excitatory neurotransmitter L-glutamate induces a conformation change, leading to the opening of the cation channel, and thereby converts the chemical signal to an electrical impulse. The receptor then desensitizes rapidly and enters a transient inactive state, characterized by the presence of bound agonist. In association with GRIK2, involved in presynaptic facilitation of glutamate release at hippocampal mossy fiber synapses. The protein is Glutamate receptor ionotropic, kainate 3 (Grik3) of Mus musculus (Mouse).